Reading from the N-terminus, the 188-residue chain is Elongation factor P (188 aa).

This sequence belongs to the elongation factor P family.

Its subcellular location is the cytoplasm. Its pathway is protein biosynthesis; polypeptide chain elongation. Involved in peptide bond synthesis. Stimulates efficient translation and peptide-bond synthesis on native or reconstituted 70S ribosomes in vitro. Probably functions indirectly by altering the affinity of the ribosome for aminoacyl-tRNA, thus increasing their reactivity as acceptors for peptidyl transferase. This is Elongation factor P from Gluconobacter oxydans (strain 621H) (Gluconobacter suboxydans).